We begin with the raw amino-acid sequence, 159 residues long: Ribosomal RNA large subunit methyltransferase H (159 aa).

S-adenosyl-L-methionine contacts are provided by residues Leu76, Gly108, and 127–132 (FSKMTF).

The protein belongs to the RNA methyltransferase RlmH family. Homodimer.

The protein resides in the cytoplasm. It catalyses the reaction pseudouridine(1915) in 23S rRNA + S-adenosyl-L-methionine = N(3)-methylpseudouridine(1915) in 23S rRNA + S-adenosyl-L-homocysteine + H(+). Specifically methylates the pseudouridine at position 1915 (m3Psi1915) in 23S rRNA. In Staphylococcus haemolyticus (strain JCSC1435), this protein is Ribosomal RNA large subunit methyltransferase H.